The following is a 302-amino-acid chain: MDEKRLTHLRQLEAESIHIIREVAAEFSNPVMMYSIGKDSSVMLHLARKAFYPGSLPFPLLHVDTGWKFREMYEFRDRTAKAYGCELLVHRNPQGEALGINPFVHGSAKHTDIMKTEGLKQALDKYGFDAAFGGARRDEEKSRAKERIYSFRDRFHRWDPKNQRPELWHNYNGQINKGESIRVFPLSNWTELDIWQYIYLENIDIVPLYLAAPRPVLERDGMLLMVDDDRIDLQPGEVIEQRMVRFRTLGCWPLTGAVASEAQTLPEIIEEMLVSTTSERQGRVIDRDQAGSMELKKRQGYF.

This sequence belongs to the PAPS reductase family. CysD subfamily. In terms of assembly, heterodimer composed of CysD, the smaller subunit, and CysN.

It carries out the reaction sulfate + ATP + H(+) = adenosine 5'-phosphosulfate + diphosphate. It participates in sulfur metabolism; hydrogen sulfide biosynthesis; sulfite from sulfate: step 1/3. With CysN forms the ATP sulfurylase (ATPS) that catalyzes the adenylation of sulfate producing adenosine 5'-phosphosulfate (APS) and diphosphate, the first enzymatic step in sulfur assimilation pathway. APS synthesis involves the formation of a high-energy phosphoric-sulfuric acid anhydride bond driven by GTP hydrolysis by CysN coupled to ATP hydrolysis by CysD. The polypeptide is Sulfate adenylyltransferase subunit 2 (Pectobacterium carotovorum subsp. carotovorum (strain PC1)).